The following is a 175-amino-acid chain: Disulfide bond formation protein B (175 aa).

Topologically, residues 1–13 (MTAFTRFAHSRAS) are cytoplasmic. Residues 14–30 (WLILTGSAIALEAAALY) form a helical membrane-spanning segment. Over 31-48 (FQYVMKLDPCVMCIYQRL) the chain is Periplasmic. Cys-40 and Cys-43 are joined by a disulfide. A helical transmembrane segment spans residues 49-64 (AVFGILAAGLIGMTAP). Topologically, residues 65 to 71 (KYRIVRI) are cytoplasmic. The chain crosses the membrane as a helical span at residues 72 to 89 (LGALGWAVSATWGLKLAL). Over 90-144 (ALVDMQNNPSPFSTCSFLPEFPAWMPLHEWFPSVMLPTGMCTDVPWQFMGVTMAE) the chain is Periplasmic. An intrachain disulfide couples Cys-104 to Cys-130. The chain crosses the membrane as a helical span at residues 145 to 163 (WMVVAFSGYLVALLLFIVP). Over 164–175 (ILSGSNKPSLYK) the chain is Cytoplasmic.

The protein belongs to the DsbB family.

It localises to the cell inner membrane. In terms of biological role, required for disulfide bond formation in some periplasmic proteins. Acts by oxidizing the DsbA protein. The protein is Disulfide bond formation protein B of Shewanella sp. (strain MR-4).